The following is a 705-amino-acid chain: Ribosomal RNA large subunit methyltransferase K/L (705 aa).

The region spanning 43–154 (VVYRCCLWSR…GEKGILGFDL (112 aa)) is the THUMP domain.

The protein belongs to the methyltransferase superfamily. RlmKL family.

It localises to the cytoplasm. It catalyses the reaction guanosine(2445) in 23S rRNA + S-adenosyl-L-methionine = N(2)-methylguanosine(2445) in 23S rRNA + S-adenosyl-L-homocysteine + H(+). The enzyme catalyses guanosine(2069) in 23S rRNA + S-adenosyl-L-methionine = N(2)-methylguanosine(2069) in 23S rRNA + S-adenosyl-L-homocysteine + H(+). In terms of biological role, specifically methylates the guanine in position 2445 (m2G2445) and the guanine in position 2069 (m7G2069) of 23S rRNA. This is Ribosomal RNA large subunit methyltransferase K/L from Aliivibrio salmonicida (strain LFI1238) (Vibrio salmonicida (strain LFI1238)).